Here is a 400-residue protein sequence, read N- to C-terminus: Large envelope protein (400 aa).

M1 carries the post-translational modification N-acetylmethionine. Disordered regions lie at residues 1–54 (MGGW…HWPE) and 85–116 (LTTVPAAPPPASTNRQSGRQPTPISPPLRDSH). G2 carries the N-myristoyl glycine; by host lipid modification. A pre-S1 region spans residues 2-119 (GGWSSKPRQG…PPLRDSHPQA (118 aa)). The tract at residues 2-174 (GGWSSKPRQG…FSRTGDPAPN (173 aa)) is pre-S. The Virion surface; in external conformation portion of the chain corresponds to 2-181 (GGWSSKPRQG…APNMENTTSG (180 aa)). Residues 2 to 253 (GGWSSKPRQG…PGYRWMCLRR (252 aa)) lie on the Intravirion; in internal conformation side of the membrane. A glycan (N-linked (GlcNAc...) asparagine) is linked at W4. Over residues 96-106 (STNRQSGRQPT) the composition is skewed to polar residues. Positions 120 to 174 (MQWNSTTFHQALLDPRVRGLYFPAGGSSSGTVNPVPTTASPISSIFSRTGDPAPN) are pre-S2. The chain crosses the membrane as a helical span at residues 182 to 202 (FLGPLLVLQAGFFLLTRILTI). Residues 203-253 (PQSLDSWWTSLNFLGGAPTCPGQNSQSPTSNHSPTSCPPICPGYRWMCLRR) lie on the Intravirion; in external conformation side of the membrane. Residues 254 to 274 (FIIFLFILLLCLIFLLVLLDY) form a helical membrane-spanning segment. The Virion surface segment spans residues 275-348 (QGMLPVCPLL…WASVRFSWLS (74 aa)). N-linked (GlcNAc...) asparagine; by host glycosylation occurs at N320. Residues 349–369 (LLVPFVQWFAGLSPTVWLSVI) traverse the membrane as a helical segment. Residues 370–375 (WMMWYW) are Intravirion-facing. A helical transmembrane segment spans residues 376-398 (GPSLYNILSPFLPLLPIFFCLWV). Residues 399 to 400 (YI) are Virion surface-facing.

This sequence belongs to the orthohepadnavirus major surface antigen family. In terms of assembly, in its internal form (Li-HBsAg), interacts with the capsid protein and with the isoform S. Interacts with host chaperone CANX. As to quaternary structure, associates with host chaperone CANX through its pre-S2 N glycan; this association may be essential for isoform M proper secretion. Interacts with isoform L. Interacts with the antigens of satellite virus HDV (HDVAgs); this interaction is required for encapsidation of HDV genomic RNA. Post-translationally, isoform M is N-terminally acetylated by host at a ratio of 90%, and N-glycosylated by host at the pre-S2 region. Myristoylated.

The protein localises to the virion membrane. The large envelope protein exists in two topological conformations, one which is termed 'external' or Le-HBsAg and the other 'internal' or Li-HBsAg. In its external conformation the protein attaches the virus to cell receptors and thereby initiating infection. This interaction determines the species specificity and liver tropism. This attachment induces virion internalization predominantly through caveolin-mediated endocytosis. The large envelope protein also assures fusion between virion membrane and endosomal membrane. In its internal conformation the protein plays a role in virion morphogenesis and mediates the contact with the nucleocapsid like a matrix protein. Its function is as follows. The middle envelope protein plays an important role in the budding of the virion. It is involved in the induction of budding in a nucleocapsid independent way. In this process the majority of envelope proteins bud to form subviral lipoprotein particles of 22 nm of diameter that do not contain a nucleocapsid. This chain is Large envelope protein, found in Homo sapiens (Human).